An 871-amino-acid chain; its full sequence is Alanine--tRNA ligase (871 aa).

4 residues coordinate Zn(2+): H561, H565, C665, and H669.

This sequence belongs to the class-II aminoacyl-tRNA synthetase family. Zn(2+) is required as a cofactor.

The protein resides in the cytoplasm. It catalyses the reaction tRNA(Ala) + L-alanine + ATP = L-alanyl-tRNA(Ala) + AMP + diphosphate. In terms of biological role, catalyzes the attachment of alanine to tRNA(Ala) in a two-step reaction: alanine is first activated by ATP to form Ala-AMP and then transferred to the acceptor end of tRNA(Ala). Also edits incorrectly charged Ser-tRNA(Ala) and Gly-tRNA(Ala) via its editing domain. The protein is Alanine--tRNA ligase of Dehalococcoides mccartyi (strain CBDB1).